Reading from the N-terminus, the 181-residue chain is Peptidyl-tRNA hydrolase (181 aa).

Tyr-14 is a binding site for tRNA. His-19 serves as the catalytic Proton acceptor. The tRNA site is built by Tyr-62, Asn-64, and Asn-108.

It belongs to the PTH family. In terms of assembly, monomer.

It localises to the cytoplasm. The enzyme catalyses an N-acyl-L-alpha-aminoacyl-tRNA + H2O = an N-acyl-L-amino acid + a tRNA + H(+). In terms of biological role, hydrolyzes ribosome-free peptidyl-tRNAs (with 1 or more amino acids incorporated), which drop off the ribosome during protein synthesis, or as a result of ribosome stalling. Functionally, catalyzes the release of premature peptidyl moieties from peptidyl-tRNA molecules trapped in stalled 50S ribosomal subunits, and thus maintains levels of free tRNAs and 50S ribosomes. The chain is Peptidyl-tRNA hydrolase from Campylobacter jejuni subsp. doylei (strain ATCC BAA-1458 / RM4099 / 269.97).